A 493-amino-acid polypeptide reads, in one-letter code: Sorting nexin-4 (493 aa).

A disordered region spans residues 1–77 (MAVIDQDNFS…ILDCTVSDPH (77 aa)). Residues 7–28 (DNFSNISWHSEQNAESAASTAQ) show a composition bias toward polar residues. Residues 56-65 (MEHDELDHSG) show a composition bias toward basic and acidic residues. The 123-residue stretch at 68 to 190 (ILDCTVSDPH…AFLESPDWNA (123 aa)) folds into the PX domain. The a 1,2-diacyl-sn-glycero-3-phospho-(1D-myo-inositol-3-phosphate) site is built by Arg111, Thr113, Lys137, and Arg156. 3 coiled-coil regions span residues 248-292 (EIKE…QKLI), 338-363 (SGTL…EYLN), and 405-442 (EQAR…QVSR).

This sequence belongs to the sorting nexin family.

It localises to the cytoplasm. Its subcellular location is the membrane. The protein resides in the endosome membrane. Its function is as follows. Sorting nexin, involved in the separation or division of vacuoles throughout the entire life cycle of the cells. Involved in retrieval of late-Golgi SNAREs from post-Golgi endosomes to the trans-Golgi network, for cytoplasm to vacuole transport (Cvt), and autophagy of large cargos including mitophagy, pexophagy and glycophagy. This is Sorting nexin-4 (vsp-5) from Neurospora crassa (strain ATCC 24698 / 74-OR23-1A / CBS 708.71 / DSM 1257 / FGSC 987).